The chain runs to 177 residues: MSDKPASMYRDIDKPAYTRREYITGIPGSKIAQHKMGRKQKDADDYPVQISLIVEETVQLRHGSLEASRLSANRHLIKELGEEGDYKMTLRKFPHQVLRENKQATGAGADRVSDGMRAAFGKIVGTAARVQAGEQLFTAYCNVEDAEHVKEAFRRAYNKITPSCRIKVERGEELLIA.

It belongs to the universal ribosomal protein uL16 family. Part of the 50S ribosomal subunit. Weakly binds 5S rRNA. Probably binds the A and P site tRNAs.

Its function is as follows. This is 1 of 5 proteins that mediate the attachment of the 5S rRNA onto the large ribosomal subunit, stabilizing the orientation of adjacent RNA domains. Modeling places the A and P site tRNAs in close proximity to this protein. This Haloarcula marismortui (strain ATCC 43049 / DSM 3752 / JCM 8966 / VKM B-1809) (Halobacterium marismortui) protein is Large ribosomal subunit protein uL16.